The following is a 243-amino-acid chain: Carboxy-S-adenosyl-L-methionine synthase (243 aa).

S-adenosyl-L-methionine is bound by residues tyrosine 40, 65 to 67, 90 to 91, 118 to 119, asparagine 133, and arginine 200; these read GCS, DN, and DI.

It belongs to the class I-like SAM-binding methyltransferase superfamily. Cx-SAM synthase family. In terms of assembly, homodimer.

The catalysed reaction is prephenate + S-adenosyl-L-methionine = carboxy-S-adenosyl-L-methionine + 3-phenylpyruvate + H2O. Functionally, catalyzes the conversion of S-adenosyl-L-methionine (SAM) to carboxy-S-adenosyl-L-methionine (Cx-SAM). This Shewanella sp. (strain ANA-3) protein is Carboxy-S-adenosyl-L-methionine synthase.